A 422-amino-acid polypeptide reads, in one-letter code: Cysteate synthase (422 aa).

Lysine 105 carries the post-translational modification N6-(pyridoxal phosphate)lysine. Asparagine 131 and threonine 379 together coordinate pyridoxal 5'-phosphate.

The protein belongs to the threonine synthase family. Cysteate synthase subfamily. As to quaternary structure, homotrimer. The cofactor is pyridoxal 5'-phosphate.

The catalysed reaction is O-phospho-L-serine + sulfite + H(+) = L-cysteate + phosphate. Its pathway is cofactor biosynthesis; coenzyme M biosynthesis. Functionally, specifically catalyzes the beta-elimination of phosphate from L-phosphoserine and the beta-addition of sulfite to the dehydroalanine intermediate to produce L-cysteate. This is Cysteate synthase from Methanospirillum hungatei JF-1 (strain ATCC 27890 / DSM 864 / NBRC 100397 / JF-1).